The following is a 109-amino-acid chain: Fluoride-specific ion channel FluC (109 aa).

The next 3 helical transmembrane spans lie at 21-41 (FFLN…GFVI), 52-72 (ILLT…LFLY), and 83-103 (LFFY…AGFL).

It belongs to the fluoride channel Fluc/FEX (TC 1.A.43) family.

Its subcellular location is the cell inner membrane. It carries out the reaction fluoride(in) = fluoride(out). Fluoride-specific ion channel. Important for reducing fluoride concentration in the cell, thus reducing its toxicity. The sequence is that of Fluoride-specific ion channel FluC from Prochlorococcus marinus (strain MIT 9515).